Consider the following 432-residue polypeptide: Putative D-alanyl-D-alanine carboxypeptidase (432 aa).

The helical; Signal-anchor transmembrane segment at 7–25 threads the bilayer; the sequence is ATVLLTFSLSAFAVEYPVL.

This sequence belongs to the peptidase S12 family. YfeW subfamily.

It is found in the cell inner membrane. The catalysed reaction is Preferential cleavage: (Ac)2-L-Lys-D-Ala-|-D-Ala. Also transpeptidation of peptidyl-alanyl moieties that are N-acyl substituents of D-alanine.. The protein is Putative D-alanyl-D-alanine carboxypeptidase of Salmonella typhimurium (strain LT2 / SGSC1412 / ATCC 700720).